Reading from the N-terminus, the 323-residue chain is Elongation factor P--(R)-beta-lysine ligase (323 aa).

76–78 provides a ligand contact to substrate; sequence SPE. Residues 100–102 and asparagine 109 each bind ATP; that span reads RNE. Tyrosine 118 provides a ligand contact to substrate. 242 to 243 lines the ATP pocket; the sequence is EL. Glutamate 249 contributes to the substrate binding site. Position 298 (glycine 298) interacts with ATP.

The protein belongs to the class-II aminoacyl-tRNA synthetase family. EpmA subfamily. Homodimer.

The enzyme catalyses D-beta-lysine + L-lysyl-[protein] + ATP = N(6)-((3R)-3,6-diaminohexanoyl)-L-lysyl-[protein] + AMP + diphosphate + H(+). Functionally, with EpmB is involved in the beta-lysylation step of the post-translational modification of translation elongation factor P (EF-P). Catalyzes the ATP-dependent activation of (R)-beta-lysine produced by EpmB, forming a lysyl-adenylate, from which the beta-lysyl moiety is then transferred to the epsilon-amino group of a conserved specific lysine residue in EF-P. The polypeptide is Elongation factor P--(R)-beta-lysine ligase (Haemophilus influenzae (strain PittGG)).